Consider the following 119-residue polypeptide: Flagellar transcriptional regulator FlhD (119 aa).

Belongs to the FlhD family. In terms of assembly, homodimer; disulfide-linked. Forms a heterohexamer composed of two FlhC and four FlhD subunits. Each FlhC binds a FlhD dimer, forming a heterotrimer, and a hexamer assembles by dimerization of two heterotrimers.

The protein localises to the cytoplasm. Functionally, functions in complex with FlhC as a master transcriptional regulator that regulates transcription of several flagellar and non-flagellar operons by binding to their promoter region. Activates expression of class 2 flagellar genes, including fliA, which is a flagellum-specific sigma factor that turns on the class 3 genes. Also regulates genes whose products function in a variety of physiological pathways. The polypeptide is Flagellar transcriptional regulator FlhD (Shigella boydii serotype 4 (strain Sb227)).